A 255-amino-acid polypeptide reads, in one-letter code: uncharacterized protein (255 aa).

The next 2 membrane-spanning stretches (helical) occupy residues 2–22 (LLPAANVIMQLAVPGVGYGVL) and 168–188 (VASVAFLPWPLRAVAGPFNLF).

Its subcellular location is the cell membrane. This is an uncharacterized protein from Mycobacterium tuberculosis (strain ATCC 25618 / H37Rv).